Reading from the N-terminus, the 453-residue chain is ATP-dependent protease ATPase subunit HslU (453 aa).

Residues I18, 60–65 (GVGKTE), D266, E331, and R403 each bind ATP.

The protein belongs to the ClpX chaperone family. HslU subfamily. A double ring-shaped homohexamer of HslV is capped on each side by a ring-shaped HslU homohexamer. The assembly of the HslU/HslV complex is dependent on binding of ATP.

The protein localises to the cytoplasm. Its function is as follows. ATPase subunit of a proteasome-like degradation complex; this subunit has chaperone activity. The binding of ATP and its subsequent hydrolysis by HslU are essential for unfolding of protein substrates subsequently hydrolyzed by HslV. HslU recognizes the N-terminal part of its protein substrates and unfolds these before they are guided to HslV for hydrolysis. The protein is ATP-dependent protease ATPase subunit HslU of Desulforapulum autotrophicum (strain ATCC 43914 / DSM 3382 / VKM B-1955 / HRM2) (Desulfobacterium autotrophicum).